A 199-amino-acid chain; its full sequence is Recombination protein RecR (199 aa).

The C4-type zinc finger occupies 58–73 (CKKCFNLTSEDECEIC). Residues 81–175 (KLICVVSETK…KVTRIAYGLP (95 aa)) form the Toprim domain.

The protein belongs to the RecR family.

Its function is as follows. May play a role in DNA repair. It seems to be involved in an RecBC-independent recombinational process of DNA repair. It may act with RecF and RecO. The chain is Recombination protein RecR from Prochlorococcus marinus (strain AS9601).